Here is a 330-residue protein sequence, read N- to C-terminus: Trans-1,2-dihydrobenzene-1,2-diol dehydrogenase (330 aa).

It belongs to the Gfo/Idh/MocA family. Homodimer.

It carries out the reaction (1R,2R)-1,2-dihydrobenzene-1,2-diol + NADP(+) = catechol + NADPH + H(+). The enzyme catalyses D-xylose + NADP(+) = D-xylono-1,5-lactone + NADPH + H(+). The protein is Trans-1,2-dihydrobenzene-1,2-diol dehydrogenase (dhdh) of Xenopus laevis (African clawed frog).